The chain runs to 404 residues: Odorant receptor 67c (404 aa).

Residues 1 to 45 (METAKDNTARTFMELMRVPVQFYRTIGEDIYAHRSTNPLKSLLFK) lie on the Cytoplasmic side of the membrane. A helical transmembrane segment spans residues 46 to 66 (IYLYAGFINFNLLVIGELVFF). Residues 67–79 (YNSIQDFETIRLA) lie on the Extracellular side of the membrane. A helical membrane pass occupies residues 80 to 100 (IAVAPCIGFSLVADFKQAAMI). Over 101-139 (RGKKTLIMLLDDLENMHPKTLAKQMEYKLPDFEKTMKRV) the chain is Cytoplasmic. Residues 140–160 (INIFTFLCLAYTTTFSFYPAI) traverse the membrane as a helical segment. Residues 161–204 (KASVKFNFLGYDTFDRNFGFLIWFPFDATRNNLIYWIMYWDIAH) lie on the Extracellular side of the membrane. The helical transmembrane segment at 205–225 (GAYLAGIAFLCADLLLVVVIT) threads the bilayer. Residues 226 to 277 (QICMHFNYISMRLEDHPCNSNEDKENIEFLIGIIRYHDKCLKLCEHVNDLYS) lie on the Cytoplasmic side of the membrane. Residues 278–298 (FSLLLNFLMASMQICFIAFQV) form a helical membrane-spanning segment. Over 299-304 (TESTVE) the chain is Extracellular. A helical transmembrane segment spans residues 305-326 (VIIIYCIFLMTSMVQVFMVCYY). The Cytoplasmic segment spans residues 327 to 373 (GDTLIAASLKVGDAAYNQKWFQCSKSYCTMLKLLIMRSQKPASIRPP). Residues 374–394 (TFPPISLVTYMKVISMSYQFF) form a helical membrane-spanning segment. At 395-404 (ALLRTTYSNN) the chain is on the extracellular side.

It belongs to the insect chemoreceptor superfamily. Heteromeric odorant receptor channel (TC 1.A.69) family. Or49a subfamily. Interacts with Orco. Complexes exist early in the endomembrane system in olfactory sensory neurons (OSNs), coupling these complexes to the conserved ciliary trafficking pathway. In terms of tissue distribution, expressed in olfactory sensory neurons in the antenna.

The protein localises to the cell membrane. In terms of biological role, odorant receptor which mediates acceptance or avoidance behavior, depending on its substrates. The odorant receptor repertoire encodes a large collection of odor stimuli that vary widely in identity, intensity, and duration. May form a complex with Orco to form odorant-sensing units, providing sensitive and prolonged odorant signaling and calcium permeability. This is Odorant receptor 67c (Or67c) from Drosophila melanogaster (Fruit fly).